A 548-amino-acid polypeptide reads, in one-letter code: Chaperonin GroEL (548 aa).

ATP is bound by residues 30–33 (TLGP), K51, 87–91 (DGTTT), G415, 479–481 (NAA), and D495.

Belongs to the chaperonin (HSP60) family. As to quaternary structure, forms a cylinder of 14 subunits composed of two heptameric rings stacked back-to-back. Interacts with the co-chaperonin GroES.

The protein localises to the cytoplasm. The catalysed reaction is ATP + H2O + a folded polypeptide = ADP + phosphate + an unfolded polypeptide.. Functionally, together with its co-chaperonin GroES, plays an essential role in assisting protein folding. The GroEL-GroES system forms a nano-cage that allows encapsulation of the non-native substrate proteins and provides a physical environment optimized to promote and accelerate protein folding. In Lawsonia intracellularis (strain PHE/MN1-00), this protein is Chaperonin GroEL.